The chain runs to 302 residues: tRNA pseudouridine synthase B (302 aa).

D47 serves as the catalytic Nucleophile.

The protein belongs to the pseudouridine synthase TruB family. Type 1 subfamily.

The enzyme catalyses uridine(55) in tRNA = pseudouridine(55) in tRNA. In terms of biological role, responsible for synthesis of pseudouridine from uracil-55 in the psi GC loop of transfer RNAs. The sequence is that of tRNA pseudouridine synthase B from Ruegeria sp. (strain TM1040) (Silicibacter sp.).